Reading from the N-terminus, the 1031-residue chain is Sodium/potassium-transporting ATPase subunit alpha (1031 aa).

The disordered stretch occupies residues 1-33 (MADPGDLESRGKADSYSVAEKKSAPKKISKKNA). Residues 7–23 (LESRGKADSYSVAEKKS) are compositionally biased toward basic and acidic residues. The segment covering 24–33 (APKKISKKNA) has biased composition (basic residues). The next 4 membrane-spanning stretches (helical) occupy residues 102–123 (MFGG…AFGI), 136–155 (LYLG…FSYY), 297–319 (FIHI…SLAM), and 326–354 (AIIF…TLTA). The active-site 4-aspartylphosphate intermediate is aspartate 382. Residue lysine 512 participates in ATP binding. Aspartate 725 and aspartate 729 together coordinate Mg(2+). 4 consecutive transmembrane segments (helical) span residues 795–818 (ISPF…ILCI), 857–882 (LISL…IILA), 924–944 (LTCQ…DLII), and 961–986 (FLNF…NTGL).

This sequence belongs to the cation transport ATPase (P-type) (TC 3.A.3) family. Type IIC subfamily. The sodium/potassium-transporting ATPase is composed of a catalytic alpha subunit, an auxiliary non-catalytic beta subunit and an additional regulatory subunit.

It localises to the cell membrane. It carries out the reaction K(+)(out) + Na(+)(in) + ATP + H2O = K(+)(in) + Na(+)(out) + ADP + phosphate + H(+). Its activity is regulated as follows. This alpha subunit is resistant to ouabain. Functionally, this is the catalytic component of the active enzyme, which catalyzes the hydrolysis of ATP coupled with the exchange of sodium and potassium ions across the plasma membrane. This action creates the electrochemical gradient of sodium and potassium ions, providing the energy for active transport of various nutrients. The polypeptide is Sodium/potassium-transporting ATPase subunit alpha (Hydra vulgaris (Hydra)).